The following is a 237-amino-acid chain: Putative anti-FlhC(2)FlhD(4) factor YdiV (237 aa).

The EAL domain occupies 1 to 237 (MKIFLENLYH…INQITTLVQR (237 aa)).

It belongs to the YdiV family.

Its function is as follows. Upon overexpression acts as a novel anti-FlhC(2)FlhD(4) factor, decreasing its DNA-binding activity, able to negatively regulate expression of flagellar class II operons including FliC. The chain is Putative anti-FlhC(2)FlhD(4) factor YdiV (ydiV) from Escherichia coli (strain K12).